The sequence spans 132 residues: Small ribosomal subunit protein uS8 (132 aa).

The protein belongs to the universal ribosomal protein uS8 family. In terms of assembly, part of the 30S ribosomal subunit. Contacts proteins S5 and S12.

In terms of biological role, one of the primary rRNA binding proteins, it binds directly to 16S rRNA central domain where it helps coordinate assembly of the platform of the 30S subunit. This is Small ribosomal subunit protein uS8 from Levilactobacillus brevis (strain ATCC 367 / BCRC 12310 / CIP 105137 / JCM 1170 / LMG 11437 / NCIMB 947 / NCTC 947) (Lactobacillus brevis).